Reading from the N-terminus, the 454-residue chain is Tyrosine aminotransferase (454 aa).

Methionine 1 carries the post-translational modification N-acetylmethionine. Lysine 280 is subject to N6-(pyridoxal phosphate)lysine. Phosphoserine is present on serine 448.

The protein belongs to the class-I pyridoxal-phosphate-dependent aminotransferase family. In terms of assembly, homodimer. Requires pyridoxal 5'-phosphate as cofactor.

The catalysed reaction is L-tyrosine + 2-oxoglutarate = 3-(4-hydroxyphenyl)pyruvate + L-glutamate. Its pathway is amino-acid degradation; L-phenylalanine degradation; acetoacetate and fumarate from L-phenylalanine: step 2/6. Its function is as follows. Transaminase involved in tyrosine breakdown. Converts tyrosine to p-hydroxyphenylpyruvate. Can catalyze the reverse reaction, using glutamic acid, with 2-oxoglutarate as cosubstrate (in vitro). Has much lower affinity and transaminase activity for phenylalanine. The sequence is that of Tyrosine aminotransferase (Tat) from Mus musculus (Mouse).